The chain runs to 202 residues: Translation initiation factor IF-3 (202 aa).

This sequence belongs to the IF-3 family. Monomer.

The protein resides in the cytoplasm. Functionally, IF-3 binds to the 30S ribosomal subunit and shifts the equilibrium between 70S ribosomes and their 50S and 30S subunits in favor of the free subunits, thus enhancing the availability of 30S subunits on which protein synthesis initiation begins. This Prochlorococcus marinus (strain MIT 9211) protein is Translation initiation factor IF-3.